The following is a 203-amino-acid chain: Cutinase pbc1 (203 aa).

The signal sequence occupies residues 1–18; the sequence is MKVTALGNTLTGFGQALA. Residues cysteine 32 and cysteine 107 are joined by a disulfide bond. Catalysis depends on serine 118, which acts as the Nucleophile. A disulfide bridge links cysteine 166 with cysteine 173. The active site involves histidine 170. The active-site Proton donor/acceptor is the histidine 183.

This sequence belongs to the cutinase family. Post-translationally, the 2 disulfide bonds play a critical role in holding the catalytic residues in juxta-position; reduction of the disulfide bridges results in the complete inactivation of the enzyme.

It localises to the secreted. The enzyme catalyses cutin + H2O = cutin monomers.. In terms of biological role, catalyzes the hydrolysis of complex carboxylic polyesters found in the cell wall of plants. Degrades cutin, a macromolecule that forms the structure of the plant cuticle. Allows pathogenic fungi to penetrate through the cuticular barrier into the host plant during the initial stage of fungal infection. This is Cutinase pbc1 from Pyrenopeziza brassicae.